The primary structure comprises 5635 residues: Hemicentin-1 (5635 aa).

Residues 1–21 form the signal peptide; it reads MISWEVVHTVFLFALLYSSLA. A VWFA domain is found at 41-216; that stretch reads TLAFVFDVTG…EVLKWVEEAV (176 aa). N-linked (GlcNAc...) asparagine glycosylation is found at Asn349 and Asn390. Ig-like C2-type domains lie at 431–517, 520–607, 612–697, 702–788, 793–883, 890–976, 981–1067, 1072–1166, 1171–1255, 1262–1354, 1358–1447, 1452–1541, 1546–1634, 1638–1724, 1733–1821, 1826–1914, 1919–2007, 2012–2097, 2104–2190, 2195–2285, 2290–2379, 2384–2470, 2478–2564, 2571–2662, 2666–2763, 2766–2864, 2868–2959, 2964–3051, 3056–3146, 3151–3240, 3245–3335, 3340–3429, 3434–3516, 3527–3615, 3620–3708, 3713–3797, 3804–3892, 3897–3983, 3988–4076, 4079–4164, 4169–4255, 4260–4344, 4348–4435, and 4440–4527; these read PKVT…FDVS, PPVI…VFLT, PKVT…STLR, PKLM…ITLD, PVFI…TTVT, PLIG…TSVV, PTIQ…VQLT, PRVF…VKLN, PKIQ…TEIT, PTVE…YNLK, PPVI…FNID, PTII…IKLT, PSIK…FHVD, PPMI…KEIK, PAIE…FEVT, PTIK…IQLH, PSLE…YSLQ, PSIS…RDID, PNIM…YNVN, PNIG…YNLQ, PTIT…YDLS, PSII…RKIF, PHIV…RSFS, PTIA…YEVK, PPII…VNIQ, PSFQ…YDVR, PPII…FNLN, PSVI…FSLT, PSIK…FHLN, PSIE…YFLS, PSVA…FNLN, PTIR…YNLQ, PNMD…GEVS, PHIN…YLVR, PNIA…FILT, PNIK…RRID, PSIA…VDLT, PSIA…VTLH, PVIQ…LNVQ, PVIS…TKLT, PRIR…VSLT, PTFT…GFVY, PPVF…MSLT, and PIIT…VIVQ. Cys451 and Cys499 are oxidised to a cystine. N-linked (GlcNAc...) asparagine glycans are attached at residues Asn528, Asn550, Asn573, and Asn620. A disulfide bridge links Cys541 with Cys591. An intrachain disulfide couples Cys633 to Cys681. Asn693 carries an N-linked (GlcNAc...) asparagine glycan. Cys723 and Cys772 are joined by a disulfide. The N-linked (GlcNAc...) asparagine glycan is linked to Asn809. Intrachain disulfides connect Cys814–Cys867 and Cys911–Cys960. Residue Asn970 is glycosylated (N-linked (GlcNAc...) asparagine). Disulfide bonds link Cys1002/Cys1051 and Cys1101/Cys1150. Residue Asn1158 is glycosylated (N-linked (GlcNAc...) asparagine). The cysteines at positions 1192 and 1241 are disulfide-linked. N-linked (GlcNAc...) asparagine glycosylation is present at Asn1272. Cysteines 1288 and 1338 form a disulfide. An N-linked (GlcNAc...) asparagine glycan is attached at Asn1369. Intrachain disulfides connect Cys1382–Cys1431 and Cys1475–Cys1525. The N-linked (GlcNAc...) asparagine glycan is linked to Asn1552. 4 disulfides stabilise this stretch: Cys1569–Cys1618, Cys1663–Cys1712, Cys1756–Cys1805, and Cys1848–Cys1898. N-linked (GlcNAc...) asparagine glycosylation occurs at Asn1929. 2 disulfide bridges follow: Cys1942–Cys1991 and Cys2033–Cys2083. 2 N-linked (GlcNAc...) asparagine glycosylation sites follow: Asn2112 and Asn2155. Disulfide bonds link Cys2125-Cys2174, Cys2218-Cys2269, and Cys2314-Cys2363. N-linked (GlcNAc...) asparagine glycosylation occurs at Asn2395. Disulfide bonds link Cys2408/Cys2457, Cys2501/Cys2550, and Cys2597/Cys2646. Residue Asn2689 is glycosylated (N-linked (GlcNAc...) asparagine). 2 cysteine pairs are disulfide-bonded: Cys2696–Cys2745 and Cys2799–Cys2848. N-linked (GlcNAc...) asparagine glycosylation is present at Asn2887. An intrachain disulfide couples Cys2894 to Cys2943. N-linked (GlcNAc...) asparagine glycosylation is present at Asn2973. Cystine bridges form between Cys2986-Cys3035, Cys3081-Cys3130, Cys3173-Cys3224, Cys3268-Cys3319, Cys3364-Cys3413, and Cys3457-Cys3506. N-linked (GlcNAc...) asparagine glycosylation is found at Asn3221 and Asn3300. N-linked (GlcNAc...) asparagine glycosylation is present at Asn3530. 2 cysteine pairs are disulfide-bonded: Cys3550/Cys3599 and Cys3643/Cys3692. N-linked (GlcNAc...) asparagine glycans are attached at residues Asn3689 and Asn3727. An intrachain disulfide couples Cys3734 to Cys3783. Asn3812 carries an N-linked (GlcNAc...) asparagine glycan. 26 cysteine pairs are disulfide-bonded: Cys3825/Cys3876, Cys3918/Cys3967, Cys4009/Cys4058, Cys4100/Cys4148, Cys4190/Cys4239, Cys4281/Cys4328, Cys4371/Cys4419, Cys4461/Cys4509, Cys4541/Cys4578, Cys4545/Cys4583, Cys4556/Cys4568, Cys4598/Cys4635, Cys4602/Cys4640, Cys4613/Cys4625, Cys4655/Cys4692, Cys4659/Cys4697, Cys4670/Cys4682, Cys4712/Cys4749, Cys4716/Cys4754, Cys4727/Cys4739, Cys4769/Cys4806, Cys4773/Cys4811, Cys4784/Cys4796, Cys4826/Cys4863, Cys4830/Cys4868, and Cys4841/Cys4853. Asn4029 is a glycosylation site (N-linked (GlcNAc...) asparagine). 2 N-linked (GlcNAc...) asparagine glycosylation sites follow: Asn4401 and Asn4491. TSP type-1 domains are found at residues 4529–4584, 4586–4641, 4643–4698, 4700–4755, 4757–4812, and 4814–4869; these read HGGF…KPCP, DGSW…RPCP, HGAW…RNCP, HGKW…DPCP, HGNW…DMCP, and DGSW…QACP. An N-linked (GlcNAc...) asparagine glycan is attached at Asn4606. One can recognise a Nidogen G2 beta-barrel domain in the interval 4871–5093; that stretch reads GPQRARGSVI…SKGDRSNQCP (223 aa). 2 N-linked (GlcNAc...) asparagine glycosylation sites follow: Asn4894 and Asn5040. One can recognise an EGF-like 1; calcium-binding domain in the interval 5107 to 5146; sequence DEDECAAGNPCSHSCHNAMGTYYCSCPKGLTIAADGRTCQ. Disulfide bonds link Cys5111-Cys5121, Cys5117-Cys5130, and Cys5132-Cys5145. The EGF-like 2; calcium-binding domain maps to 5147-5191; that stretch reads DIDECALGRHTCHAGQDCDNTIGSYRCVVRCGSGFRRTSDGLSCQ. Residues 5192–5229 enclose the EGF-like 3; calcium-binding domain; it reads DINECQESSPCHQRCFNAIGSFHCGCEPGYQLKGRKCM. 3 disulfides stabilise this stretch: Cys5196-Cys5206, Cys5202-Cys5215, and Cys5217-Cys5228. The region spanning 5230–5271 is the EGF-like 4; calcium-binding domain; that stretch reads DVNECRQNVCRPDQHCKNTRGGYKCIDLCPNGMTKAENGTCI. An N-linked (GlcNAc...) asparagine glycan is attached at Asn5267. Residues 5272–5307 enclose the EGF-like 5; calcium-binding domain; that stretch reads DIDECKDGTHQCRYNQICENTRGSYRCVCPRGYRSQ. 8 cysteine pairs are disulfide-bonded: Cys5276/Cys5289, Cys5283/Cys5298, Cys5319/Cys5330, Cys5326/Cys5339, Cys5341/Cys5354, Cys5436/Cys5446, Cys5442/Cys5455, and Cys5457/Cys5470. The EGF-like 6; calcium-binding domain maps to 5315–5355; that stretch reads DINECEQVPKPCAHQCSNTPGSFKCICPPGQHLLGDGKSCA. Residues 5432-5471 form the EGF-like 7; calcium-binding domain; the sequence is DIDECENTDACQHECKNTFGSYQCICPPGYQLTHNGKTCQ. Residue Asn5615 is glycosylated (N-linked (GlcNAc...) asparagine).

Expressed in hair follicles and in the dermis (at protein level). In terms of tissue distribution, expressed in skin fibroblasts and retinal pigment epithelium (RPE) cells.

Its subcellular location is the secreted. The protein localises to the extracellular space. It is found in the extracellular matrix. It localises to the basement membrane. The protein resides in the cytoplasm. Its subcellular location is the cell junction. The protein localises to the cleavage furrow. In terms of biological role, involved in transforming growth factor beta-mediated rearrangement of the podocyte cytoskeleton which includes reduction of F-actin fibers and broadening, flattening and elongation of podocytes. Plays a role in basement membrane organization. May promote cleavage furrow maturation during cytokinesis in preimplantation embryos. May play a role in the architecture of adhesive and flexible epithelial cell junctions. May play a role during myocardial remodeling by imparting an effect on cardiac fibroblast migration. The sequence is that of Hemicentin-1 (HMCN1) from Homo sapiens (Human).